Here is a 164-residue protein sequence, read N- to C-terminus: MNIVDQQTFRDAMSCMGAAVNIITTDGPAGRAGFTASAVCSVTDTPPTLLVCLNRGASVWPVFNENRTLCVNTLSAGQESLSNLFGGKTPMEHRFAAARWQTGVTGCPQLGEALVSFDCRISQVVSVGTHDILFCAIEAIHRHATPYGLVWFDRSYHALMRPAC.

The protein belongs to the non-flavoprotein flavin reductase family. RutF subfamily.

It carries out the reaction FMNH2 + NAD(+) = FMN + NADH + 2 H(+). Its function is as follows. Catalyzes the reduction of FMN to FMNH2 which is used to reduce pyrimidine by RutA via the Rut pathway. This chain is FMN reductase (NADH) RutF, found in Escherichia coli O6:K15:H31 (strain 536 / UPEC).